Consider the following 44-residue polypeptide: Large ribosomal subunit protein bL34 (44 aa).

A disordered region spans residues 1–26 (MQRTLGGTNRKRKRTSGFRARMRTPD). Residues 9–22 (NRKRKRTSGFRARM) are compositionally biased toward basic residues.

Belongs to the bacterial ribosomal protein bL34 family.

This is Large ribosomal subunit protein bL34 from Trichormus variabilis (strain ATCC 29413 / PCC 7937) (Anabaena variabilis).